A 98-amino-acid polypeptide reads, in one-letter code: Mobilization protein MobS (98 aa).

In terms of biological role, this protein is essential to promote the specific transfer of the plasmid in the presence of conjugative plasmids. The protein is Mobilization protein MobS (mobS) of Acidithiobacillus ferridurans.